We begin with the raw amino-acid sequence, 95 residues long: Small ribosomal subunit protein uS19 (95 aa).

The disordered stretch occupies residues 73–95 (EFSPTRTYRGHGADKNAKGSKKK).

Belongs to the universal ribosomal protein uS19 family.

Its function is as follows. Protein S19 forms a complex with S13 that binds strongly to the 16S ribosomal RNA. The sequence is that of Small ribosomal subunit protein uS19 from Deinococcus radiodurans (strain ATCC 13939 / DSM 20539 / JCM 16871 / CCUG 27074 / LMG 4051 / NBRC 15346 / NCIMB 9279 / VKM B-1422 / R1).